The primary structure comprises 643 residues: 1-deoxy-D-xylulose-5-phosphate synthase (643 aa).

Thiamine diphosphate is bound by residues His72 and 113-115; that span reads GHA. Position 144 (Asp144) interacts with Mg(2+). Thiamine diphosphate contacts are provided by residues 145–146, Asn174, Tyr287, and Glu370; that span reads GA. Asn174 serves as a coordination point for Mg(2+).

This sequence belongs to the transketolase family. DXPS subfamily. As to quaternary structure, homodimer. Requires Mg(2+) as cofactor. It depends on thiamine diphosphate as a cofactor.

It carries out the reaction D-glyceraldehyde 3-phosphate + pyruvate + H(+) = 1-deoxy-D-xylulose 5-phosphate + CO2. The protein operates within metabolic intermediate biosynthesis; 1-deoxy-D-xylulose 5-phosphate biosynthesis; 1-deoxy-D-xylulose 5-phosphate from D-glyceraldehyde 3-phosphate and pyruvate: step 1/1. Its function is as follows. Catalyzes the acyloin condensation reaction between C atoms 2 and 3 of pyruvate and glyceraldehyde 3-phosphate to yield 1-deoxy-D-xylulose-5-phosphate (DXP). In Prochlorococcus marinus (strain SARG / CCMP1375 / SS120), this protein is 1-deoxy-D-xylulose-5-phosphate synthase.